A 2290-amino-acid polypeptide reads, in one-letter code: Protein Ycf2 (2290 aa).

1638–1645 (GSIGTGRS) contributes to the ATP binding site.

The protein belongs to the Ycf2 family.

It localises to the plastid. The protein localises to the chloroplast stroma. Its function is as follows. Probable ATPase of unknown function. Its presence in a non-photosynthetic plant (Epifagus virginiana) and experiments in tobacco indicate that it has an essential function which is probably not related to photosynthesis. The chain is Protein Ycf2 from Phalaenopsis aphrodite subsp. formosana (Moth orchid).